We begin with the raw amino-acid sequence, 396 residues long: MAKAKFERTKPHVNIGTIGHVDHGKTTTTAAITKVLADAYPELNEAFAFDSIDKAPEEKERGITINISHVEYQTEKRHYAHVDAPGHADYIKNMITGAAQMDGAILVVAATDGPMPQTREHVLLARQVGVPYILVALNKCDMVEDEEIIELVEMEVRELLAEQDYDEEAPIVHISALKALEGDEKWGKQILELMQACDDNIPDPVRETDKPFLMPIEDIFTITGRGTVVTGRVERGTLNVNDDVDIIGIKEKSTSTTVTGIEMFRKLLDSAEAGDNCGLLLRGIKREDVERGQVIVKPGAYTPHTEFEGSVYVLSKDEGGRHTPFFDNYRPQFYFRTTDVTGVVKLPEGTEMVMPGDNVDMSVTLIQPVAMDEGLRFAIREGSRTVGAGRVTKIIK.

The tr-type G domain occupies 10–205; that stretch reads KPHVNIGTIG…ACDDNIPDPV (196 aa). The G1 stretch occupies residues 19–26; that stretch reads GHVDHGKT. Position 19 to 26 (19 to 26) interacts with GTP; sequence GHVDHGKT. Position 26 (threonine 26) interacts with Mg(2+). The segment at 62 to 66 is G2; it reads GITIN. Residues 83-86 are G3; the sequence is DAPG. GTP contacts are provided by residues 83–87 and 138–141; these read DAPGH and NKCD. Positions 138-141 are G4; the sequence is NKCD. The segment at 175–177 is G5; sequence SAL.

Belongs to the TRAFAC class translation factor GTPase superfamily. Classic translation factor GTPase family. EF-Tu/EF-1A subfamily. In terms of assembly, monomer.

The protein localises to the cytoplasm. The enzyme catalyses GTP + H2O = GDP + phosphate + H(+). GTP hydrolase that promotes the GTP-dependent binding of aminoacyl-tRNA to the A-site of ribosomes during protein biosynthesis. The polypeptide is Elongation factor Tu (Corynebacterium glutamicum (strain R)).